We begin with the raw amino-acid sequence, 330 residues long: MKHLHVLLLCGGGGSEHEISLLSANYLESQLKELAEVSVTRVELFPDHWQTNDGRSCHLGMDRQLHFANEAKPVDFVVPCIHGFPGETGDIQSMLELIGLPYLGCGSEGSKLCFNKVSTKLWLSALDIPNTPFLFLSDNNEAAHAQAHTAFRNWGAVFVKAASQGSSVGCYKVTDAAKLSEAVNAAFGYSDQVLVEKAVRPRELEVAVYRYNDQLVATRPGEIATPSDSFYSYEEKYSSGSNSTTYLEAPGLSDAQISTIREYALKAFTQLGLKDLSRIDFFLTEDNEILLNEINTFPGMTPISMFPKLLEHHGDNFKQFLEGIIRSTVK.

The ATP-grasp domain maps to 120 to 326 (KLWLSALDIP…FKQFLEGIIR (207 aa)). Residue 150 to 205 (AFRNWGAVFVKAASQGSSVGCYKVTDAAKLSEAVNAAFGYSDQVLVEKAVRPRELE) participates in ATP binding. Mg(2+)-binding residues include D280, E293, and N295.

Belongs to the D-alanine--D-alanine ligase family. Requires Mg(2+) as cofactor. The cofactor is Mn(2+).

The protein localises to the cytoplasm. The enzyme catalyses 2 D-alanine + ATP = D-alanyl-D-alanine + ADP + phosphate + H(+). Its pathway is cell wall biogenesis; peptidoglycan biosynthesis. In terms of biological role, cell wall formation. The sequence is that of D-alanine--D-alanine ligase from Tolumonas auensis (strain DSM 9187 / NBRC 110442 / TA 4).